The following is a 222-amino-acid chain: Ribosomal RNA large subunit methyltransferase E (222 aa).

Over residues 1 to 13 the composition is skewed to basic and acidic residues; it reads MSRSDKNPHERLK. A disordered region spans residues 1–22; it reads MSRSDKNPHERLKTAKKRTASS. S-adenosyl-L-methionine contacts are provided by G75, W77, D94, D110, and D134. K174 functions as the Proton acceptor in the catalytic mechanism.

The protein belongs to the class I-like SAM-binding methyltransferase superfamily. RNA methyltransferase RlmE family.

Its subcellular location is the cytoplasm. The enzyme catalyses uridine(2552) in 23S rRNA + S-adenosyl-L-methionine = 2'-O-methyluridine(2552) in 23S rRNA + S-adenosyl-L-homocysteine + H(+). In terms of biological role, specifically methylates the uridine in position 2552 of 23S rRNA at the 2'-O position of the ribose in the fully assembled 50S ribosomal subunit. This chain is Ribosomal RNA large subunit methyltransferase E, found in Novosphingobium aromaticivorans (strain ATCC 700278 / DSM 12444 / CCUG 56034 / CIP 105152 / NBRC 16084 / F199).